The sequence spans 929 residues: von Willebrand factor C and EGF domain-containing protein (929 aa).

The signal sequence occupies residues 1–21 (MWARLLLHVAYILIPLLGSSA). Residues 70-98 (LCSFGCGSGICIAPNVCSCQDGEQGATCP) form the EGF-like 1 domain. One can recognise an EGF-like 2; calcium-binding domain in the interval 142 to 180 (DIDECLSSSCEGHCVNTEGGFVCECGPGMQLSADRHSCQ). Cystine bridges form between cysteine 146-cysteine 155, cysteine 151-cysteine 164, cysteine 166-cysteine 179, cysteine 185-cysteine 194, cysteine 190-cysteine 203, cysteine 205-cysteine 218, cysteine 224-cysteine 237, cysteine 233-cysteine 246, and cysteine 248-cysteine 261. Positions 181 to 219 (DTDECLGTPCQQRCKNSIGSYKCSCRAGFHLHGNRHSCI) constitute an EGF-like 3; calcium-binding domain. The EGF-like 4; calcium-binding domain occupies 220–262 (DVNECRRPQERRVCHHTCHNTVGSFLCTCRPGFRLRSDRVSCE). Disordered stretches follow at residues 291–317 (AGRP…RTIS) and 339–374 (PSSS…LGAG). Residues 339–353 (PSSSPLGTLGPPSLL) are compositionally biased toward low complexity. VWFC domains follow at residues 376–433 (SSCW…PSCT), 433–494 (TGCF…GRCY), 491–552 (GRCY…FTCR), 558–618 (TGCS…PDCS), 619–677 (AGCT…PVCH), and 677–762 (HDCN…VNCS). 2 N-linked (GlcNAc...) asparagine glycosylation sites follow: asparagine 454 and asparagine 464. The segment at 731–774 (PLEEKQQPSPHGELAKAARNARGDTEVPVNCSSCPGPPSASPTR) is disordered. Basic and acidic residues predominate over residues 743–755 (ELAKAARNARGDT). Asparagine 787 is a glycosylation site (N-linked (GlcNAc...) asparagine). A compositionally biased stretch (polar residues) spans 791 to 807 (IQSASPSPPIAQTSSSP). Disordered stretches follow at residues 791 to 861 (IQSA…SSTF) and 879 to 929 (AETP…NSTI). Over residues 889 to 903 (LSETLTTSSSSQRLS) the composition is skewed to low complexity.

Its subcellular location is the secreted. In terms of biological role, may be a regulatory element in the beta-catenin signaling pathway and a target for chemoprevention of hapatocellular carcinoma. The protein is von Willebrand factor C and EGF domain-containing protein (Vwce) of Mus musculus (Mouse).